A 544-amino-acid polypeptide reads, in one-letter code: Serine/threonine-protein kinase PAK 1 (544 aa).

The segment at 1-77 (MSNNGLDIQD…KEKERPEISL (77 aa)) is disordered. S2 carries the post-translational modification N-acetylserine. The residue at position 21 (S21) is a Phosphoserine; by PKB and autocatalysis. Residues 68 to 77 (KEKERPEISL) are compositionally biased toward basic and acidic residues. The interval 70–140 (KERPEISLPS…YNSKKTSNSQ (71 aa)) is autoregulatory region. A CRIB domain is found at 75–88 (ISLPSDFEHTIHVG). The GTPase-binding stretch occupies residues 75-105 (ISLPSDFEHTIHVGFDAVTGEFTGMPEQWAR). At T84 the chain carries Phosphothreonine; by OXSR1. Phosphoserine is present on S115. 2 positions are modified to phosphotyrosine: Y131 and Y142. S144 and S149 each carry phosphoserine; by autocatalysis. Y153 carries the post-translational modification Phosphotyrosine; by JAK2. The disordered stretch occupies residues 161–193 (VKAVSETPAVPPVSEDEDDDDDGTPPPVIAPRP). S174 carries the phosphoserine modification. Positions 174-183 (SEDEDDDDDG) are enriched in acidic residues. Phosphothreonine is present on T184. S198 is modified (phosphoserine; by autocatalysis). Residue Y200 is modified to Phosphotyrosine; by JAK2. Residue S203 is modified to Phosphoserine; by autocatalysis. Phosphothreonine occurs at positions 211 and 218. Residues 212–250 (PTRDVATSPISPTENNTTPPDALTRNTEKQKKKPKMSDE) are disordered. A phosphoserine mark is found at S219 and S222. A compositionally biased stretch (polar residues) spans 219–230 (SPISPTENNTTP). Phosphothreonine occurs at positions 224, 228, and 229. Positions 269–520 (YTRFEKIGQG…AKELLQHQFL (252 aa)) constitute a Protein kinase domain. 275–283 (IGQGASGTV) contacts ATP. Y284 carries the post-translational modification Phosphotyrosine; by JAK2. K298 lines the ATP pocket. D388 (proton acceptor) is an active-site residue. T422 bears the Phosphothreonine; by autocatalysis, BRSK2 and PDPK1 mark.

Belongs to the protein kinase superfamily. STE Ser/Thr protein kinase family. STE20 subfamily. Homodimer in its autoinhibited state. Active as monomer. Interacts with GIT1. Component of cytoplasmic complexes, which also contains PXN, ARHGEF7 and GIT1. Interacts with NISCH. Interacts with DVL1; mediates the formation of a DVL1, MUSK and PAK1 ternary complex involved in AChR clustering. Binds to the caspase-cleaved p110 isoform of CDC2L1 and CDC2L2, p110C, but not the full-length proteins. Interacts with ARHGEF7. Interacts tightly with GTP-bound but not GDP-bound CDC42/P21 and RAC1. Probably found in a ternary complex composed of DSCAM, PAK1 and RAC1. Interacts with DSCAM (via cytoplasmic domain); the interaction is direct and enhanced in presence of RAC1. Interacts with SCRIB. Interacts with PDPK1. Interacts (via kinase domain) with RAF1. Interacts with NCK1 and NCK2. Interacts with TBCB. Interacts with BRSK2. Interacts with SNAI1. Interacts with CIB1 (via N-terminal region); the interaction is direct, promotes PAK1 activity and occurs in a calcium-dependent manner. Interacts with INPP5K. Interacts with gamma-tubulin. Interacts with RHOU; the interaction promotes PAK1 activation. Mg(2+) serves as cofactor. Post-translationally, autophosphorylated in trans, meaning that in a dimer, one kinase molecule phosphorylates the other one. Activated by autophosphorylation at Thr-422 in response to a conformation change, triggered by interaction with GTP-bound CDC42 or RAC1. Activated by phosphorylation at Thr-422 by BRSK2 and by PDPK1. Phosphorylated by JAK2 in response to PRL; this increases PAK1 kinase activity. Phosphorylated at Ser-21 by PKB/AKT; this reduces interaction with NCK1 and association with focal adhesion sites. Upon DNA damage, phosphorylated at Thr-211 and translocates to the nucleoplasm. Phosphorylated at tyrosine residues, which can be enhanced by NTN1.

It is found in the cytoplasm. Its subcellular location is the cell junction. The protein localises to the focal adhesion. It localises to the cell projection. The protein resides in the lamellipodium. It is found in the cell membrane. Its subcellular location is the ruffle membrane. The protein localises to the invadopodium. It localises to the nucleus. The protein resides in the nucleoplasm. It is found in the chromosome. Its subcellular location is the cytoskeleton. The protein localises to the microtubule organizing center. It localises to the centrosome. It catalyses the reaction L-seryl-[protein] + ATP = O-phospho-L-seryl-[protein] + ADP + H(+). It carries out the reaction L-threonyl-[protein] + ATP = O-phospho-L-threonyl-[protein] + ADP + H(+). With respect to regulation, phosphorylation of Thr-84 by OXSR1 inhibits activation. Activated by binding small G proteins. Binding of GTP-bound CDC42 or RAC1 to the autoregulatory region releases monomers from the autoinhibited dimer, and enables activation by phosphorylation of Thr-422. In terms of biological role, protein kinase involved in intracellular signaling pathways downstream of integrins and receptor-type kinases that plays an important role in cytoskeleton dynamics, in cell adhesion, migration, proliferation, apoptosis, mitosis, and in vesicle-mediated transport processes. Can directly phosphorylate BAD and protects cells against apoptosis. Activated by interaction with CDC42 and RAC1. Functions as a GTPase effector that links the Rho-related GTPases CDC42 and RAC1 to the JNK MAP kinase pathway. Phosphorylates and activates MAP2K1, and thereby mediates activation of downstream MAP kinases. Involved in the reorganization of the actin cytoskeleton, actin stress fibers and of focal adhesion complexes. Phosphorylates the tubulin chaperone TBCB and thereby plays a role in the regulation of microtubule biogenesis and organization of the tubulin cytoskeleton. Plays a role in the regulation of insulin secretion in response to elevated glucose levels. Part of a ternary complex that contains PAK1, DVL1 and MUSK that is important for MUSK-dependent regulation of AChR clustering during the formation of the neuromuscular junction (NMJ). Activity is inhibited in cells undergoing apoptosis, potentially due to binding of CDC2L1 and CDC2L2. Phosphorylates MYL9/MLC2. Phosphorylates RAF1 at 'Ser-338' and 'Ser-339' resulting in: activation of RAF1, stimulation of RAF1 translocation to mitochondria, phosphorylation of BAD by RAF1, and RAF1 binding to BCL2. Phosphorylates SNAI1 at 'Ser-246' promoting its transcriptional repressor activity by increasing its accumulation in the nucleus. In podocytes, promotes NR3C2 nuclear localization. Required for atypical chemokine receptor ACKR2-induced phosphorylation of LIMK1 and cofilin (CFL1) and for the up-regulation of ACKR2 from endosomal compartment to cell membrane, increasing its efficiency in chemokine uptake and degradation. In synapses, seems to mediate the regulation of F-actin cluster formation performed by SHANK3, maybe through CFL1 phosphorylation and inactivation. Plays a role in RUFY3-mediated facilitating gastric cancer cells migration and invasion. In response to DNA damage, phosphorylates MORC2 which activates its ATPase activity and facilitates chromatin remodeling. In neurons, plays a crucial role in regulating GABA(A) receptor synaptic stability and hence GABAergic inhibitory synaptic transmission through its role in F-actin stabilization. In hippocampal neurons, necessary for the formation of dendritic spines and excitatory synapses; this function is dependent on kinase activity and may be exerted by the regulation of actomyosin contractility through the phosphorylation of myosin II regulatory light chain (MLC). Along with GIT1, positively regulates microtubule nucleation during interphase. Phosphorylates FXR1, promoting its localization to stress granules and activity. Phosphorylates ILK on 'Thr-173' and 'Ser-246', promoting nuclear export of ILK. The chain is Serine/threonine-protein kinase PAK 1 from Bos taurus (Bovine).